The sequence spans 90 residues: Small ribosomal subunit protein uS15 (90 aa).

This sequence belongs to the universal ribosomal protein uS15 family. In terms of assembly, part of the 30S ribosomal subunit. Forms a bridge to the 50S subunit in the 70S ribosome, contacting the 23S rRNA.

Its function is as follows. One of the primary rRNA binding proteins, it binds directly to 16S rRNA where it helps nucleate assembly of the platform of the 30S subunit by binding and bridging several RNA helices of the 16S rRNA. Forms an intersubunit bridge (bridge B4) with the 23S rRNA of the 50S subunit in the ribosome. The polypeptide is Small ribosomal subunit protein uS15 (Aliarcobacter butzleri (strain RM4018) (Arcobacter butzleri)).